We begin with the raw amino-acid sequence, 356 residues long: Serendipity locus protein beta (356 aa).

The C2H2-type 1; degenerate zinc-finger motif lies at 171–193; it reads IPCHICGEMFSSQEVLERHIKAD. 5 consecutive C2H2-type zinc fingers follow at residues 201–223, 229–251, 257–279, 286–308, and 315–337; these read ATCN…MNLH, LECR…MEVH, YQCD…LMRH, LICE…LRTH, and YPCP…KRVH.

In terms of assembly, binds chromatin; requires N-terminal regions to form protein-protein contacts, in addition to DNA specific recognition by the zinc fingers.

It is found in the nucleus. Functionally, binds to the consensus DNA sequence 5'-YCAGAGATGCGCA-3'. This chain is Serendipity locus protein beta (Sry-beta), found in Drosophila melanogaster (Fruit fly).